We begin with the raw amino-acid sequence, 159 residues long: Ribosome-binding factor A (159 aa).

Composition is skewed to basic and acidic residues over residues 118-128 and 137-146; these read AADDEVAKARE and DPYKEPRVAS. Residues 118–159 are disordered; it reads AADDEVAKARENAQPAGDADPYKEPRVASDEDEASPDVREAD.

Belongs to the RbfA family. Monomer. Binds 30S ribosomal subunits, but not 50S ribosomal subunits or 70S ribosomes.

Its subcellular location is the cytoplasm. One of several proteins that assist in the late maturation steps of the functional core of the 30S ribosomal subunit. Associates with free 30S ribosomal subunits (but not with 30S subunits that are part of 70S ribosomes or polysomes). Required for efficient processing of 16S rRNA. May interact with the 5'-terminal helix region of 16S rRNA. In Rhodococcus erythropolis (strain PR4 / NBRC 100887), this protein is Ribosome-binding factor A.